The sequence spans 421 residues: Hydrolyase poxO (421 aa).

Ser239 acts as the Nucleophile in catalysis.

The protein belongs to the AB hydrolase superfamily. FUS2 hydrolase family. As to quaternary structure, homodimer.

Its pathway is secondary metabolite biosynthesis. Hydrolyase; part of the gene cluster that mediates the biosynthesis of oxaleimides, cytotoxic compounds containing an unusual disubstituted succinimide moiety. The first step of the pathway is provided by the HR-PKS poxF that serves in a new mode of collaborative biosynthesis with the PKS-NRPS poxE, by providing the olefin containing amino acid substrate via the synthesis of an ACP-bound dec-4-enoate. The cytochrome P450 monooxygenase poxM-catalyzed oxidation at the alpha-position creates the enzyme-bound 2-hydroxydec-4-enoyl-ACP thioester, which may be prone to spontaneous hydrolysis to yield 2-hydroxydec-4-enoic acid due to increased electrophilicity of the carbonyl. 2-hydroxydec-4-enoic acid can then be further oxidized by poxM to yield the alpha-ketoacid 2-oxodec-4-enoicacid, which is reductively aminated by the aminotransferase poxL to yield (S,E)-2-aminodec-4-enoic acid. The Hybrid PKS-NRPS synthetase poxE then performs condensation between the octaketide product of its PKS modules and the amino group of (S,E)-2-aminodec-4-enoic acid which is activated and incorporated by the adenylation domain. The resulting aminoacyl product can be cyclized by the Diels-Alderase PoxQ and reductively released by the reductive (R) domain of poxE to yield an aldehyde intermediate. The released aldehyde is then substrate for a Knoevenagel condensation by the hydrolyase poxO followed by an oxidation at the 5-position of the pyrrolidone ring. The presence of the olefin from the amino acid building block allows for migration of the substituted allyl group to occur. This allylic transposition reaction takes place in a conjugate addition, semipinacol-like fashion to yield a succinimide intermediate. Iterative two-electron oxidations of the C7 methyl of the succinimide intermediate to the carboxylic acid can be catalyzed by one of two remaining cytochrome P450 monooxygenasess poxC or poxD to yield oxaleimide A. Subsequent oxidation yields the maleimide scaffold oxaleimide I. Both oxaleimide A and oxaleimide I can undergo oxidative modifications in the decalin ring to yield the series of products oxaleimides B to H. This Penicillium oxalicum (strain 114-2 / CGMCC 5302) (Penicillium decumbens) protein is Hydrolyase poxO.